The sequence spans 159 residues: Transcriptional repressor NrdR (159 aa).

Residues 3 to 34 (CPFCRHEDTQVVDSRVSEDGAAIRRRRRCSAC) fold into a zinc finger. The region spanning 49 to 139 (PAVVKKDGSR…VYRRFEDVSE (91 aa)) is the ATP-cone domain.

Belongs to the NrdR family. The cofactor is Zn(2+).

Its function is as follows. Negatively regulates transcription of bacterial ribonucleotide reductase nrd genes and operons by binding to NrdR-boxes. The chain is Transcriptional repressor NrdR from Burkholderia ambifaria (strain MC40-6).